The chain runs to 160 residues: MAIEGVLNEGFVTTTADKLINWTRTGSLWPMTFGLACCAVEMMHAGAARYDLDRFGVVFRPSPRQSDVMIVAGTLCNKMAPALRKVYDQMAEPRWVISMGSCANGGGYYHYSYSVVRGCDRIVPVDIYVPGCPPTAEALIYGVIQLQNKIKRTNTIARKG.

Residues Cys-37, Cys-38, Cys-102, and Cys-132 each contribute to the [4Fe-4S] cluster site.

The protein belongs to the complex I 20 kDa subunit family. In terms of assembly, NDH-1 is composed of 14 different subunits. Subunits NuoB, C, D, E, F, and G constitute the peripheral sector of the complex. [4Fe-4S] cluster is required as a cofactor.

The protein resides in the cell inner membrane. It carries out the reaction a quinone + NADH + 5 H(+)(in) = a quinol + NAD(+) + 4 H(+)(out). In terms of biological role, NDH-1 shuttles electrons from NADH, via FMN and iron-sulfur (Fe-S) centers, to quinones in the respiratory chain. Couples the redox reaction to proton translocation (for every two electrons transferred, four hydrogen ions are translocated across the cytoplasmic membrane), and thus conserves the redox energy in a proton gradient. This chain is NADH-quinone oxidoreductase subunit B, found in Cupriavidus pinatubonensis (strain JMP 134 / LMG 1197) (Cupriavidus necator (strain JMP 134)).